We begin with the raw amino-acid sequence, 198 residues long: MKSIEIKGTVRTDVGKKATHELRKNNGVPCVLYGVQKDENGLPVATHFSVPTEGLRNLVYTPHIYVVDLNIDGKIVNAILKDIQFHPVTDAILHVDFYQIDEAKPIVMEVPVQLEGLAEGVRAGGKLALQLRKLKVKALYNVIPERLVVDVTSLGLGKTVKVGELSYEGLELINAKEAVVCAVKLTRAARGAAATAGK.

The protein belongs to the bacterial ribosomal protein bL25 family. CTC subfamily. Part of the 50S ribosomal subunit; part of the 5S rRNA/L5/L18/L25 subcomplex. Contacts the 5S rRNA. Binds to the 5S rRNA independently of L5 and L18.

Functionally, this is one of the proteins that binds to the 5S RNA in the ribosome where it forms part of the central protuberance. This is Large ribosomal subunit protein bL25 from Phocaeicola vulgatus (strain ATCC 8482 / DSM 1447 / JCM 5826 / CCUG 4940 / NBRC 14291 / NCTC 11154) (Bacteroides vulgatus).